The following is a 738-amino-acid chain: Polyribonucleotide nucleotidyltransferase (738 aa).

Aspartate 487 and aspartate 493 together coordinate Mg(2+). Residues 554-613 (PKIVTMTINPDKIRDVIGPGGKMINSIIDQTGVKIDIEQDGTVFIASTDQEGIDLAMSMI) form the KH domain. Residues 623–691 (GEVYDATVRR…DKGRVNASRK (69 aa)) enclose the S1 motif domain. The tract at residues 704-738 (EAYEAKRKAARESRPPRDSRPPRRDGDRRPPRSTN) is disordered.

This sequence belongs to the polyribonucleotide nucleotidyltransferase family. Requires Mg(2+) as cofactor.

It localises to the cytoplasm. The enzyme catalyses RNA(n+1) + phosphate = RNA(n) + a ribonucleoside 5'-diphosphate. Functionally, involved in mRNA degradation. Catalyzes the phosphorolysis of single-stranded polyribonucleotides processively in the 3'- to 5'-direction. The protein is Polyribonucleotide nucleotidyltransferase of Exiguobacterium sp. (strain ATCC BAA-1283 / AT1b).